A 667-amino-acid polypeptide reads, in one-letter code: Putative L-type lectin-domain containing receptor kinase I.4 (667 aa).

The N-terminal stretch at 1-21 (MDCRLHLVLFFSCVCLICLSG) is a signal peptide. The Extracellular portion of the chain corresponds to 22-294 (QQETGFVYNG…PREEKKKLHP (273 aa)). The segment at 24–257 (ETGFVYNGFH…NQYILGWSFS (234 aa)) is legume-lectin like. 7 N-linked (GlcNAc...) asparagine glycosylation sites follow: N55, N110, N124, N128, N181, N204, and N225. Residues 295–315 (LLIGLVILLVIPVLMVLGGVY) form a helical membrane-spanning segment. Residues 316–667 (WYRRKKYAEV…THSILEGYGR (352 aa)) lie on the Cytoplasmic side of the membrane. The Protein kinase domain occupies 350-625 (FVKDALVGKG…QYLSQKQPLP (276 aa)). Residues 356–364 (VGKGGFGKV) and K378 contribute to the ATP site. D474 (proton acceptor) is an active-site residue.

In the C-terminal section; belongs to the protein kinase superfamily. Ser/Thr protein kinase family. It in the N-terminal section; belongs to the leguminous lectin family.

It localises to the cell membrane. The catalysed reaction is L-seryl-[protein] + ATP = O-phospho-L-seryl-[protein] + ADP + H(+). It catalyses the reaction L-threonyl-[protein] + ATP = O-phospho-L-threonyl-[protein] + ADP + H(+). The sequence is that of Putative L-type lectin-domain containing receptor kinase I.4 (LECRK14) from Arabidopsis thaliana (Mouse-ear cress).